Here is a 500-residue protein sequence, read N- to C-terminus: NAD(P)H-quinone oxidoreductase chain 4, chloroplastic (500 aa).

Transmembrane regions (helical) follow at residues 4 to 24 (FPWLTIIVGFPISAGSLMLFL), 35 to 55 (YTICICILELLITTYAFCYNF), 87 to 107 (IGTILLTGFITTLAALAAFPV), 113 to 130 (FFHFLMLAMYSGQIGSFS), 134 to 154 (LLLFFIMWELELIPVYLLLSM), 167 to 187 (FILYTAGSSIFLLIGVLGISL), 211 to 231 (ILFYIGFLIAFAVKSPIIPLH), 242 to 262 (HYSTCMLLAGILLKMGAYGLV), 272 to 292 (AHSMFSPWLMVVGTIQIIYAA), 305 to 325 (IAYSSVSHMGFIIIGIGSITD), 330 to 350 (GAILQIISHGFIGAALFFLAG), 386 to 406 (LALPGMSGFVAELIVFFGIIT), 416 to 436 (ILIIFVMAIGMILTPIYLLSM), and 462 to 482 (LFLSISILLPIIGIGIYPDFV).

This sequence belongs to the complex I subunit 4 family.

It is found in the plastid. The protein localises to the chloroplast thylakoid membrane. The catalysed reaction is a plastoquinone + NADH + (n+1) H(+)(in) = a plastoquinol + NAD(+) + n H(+)(out). It carries out the reaction a plastoquinone + NADPH + (n+1) H(+)(in) = a plastoquinol + NADP(+) + n H(+)(out). In Arabis hirsuta (Hairy rock-cress), this protein is NAD(P)H-quinone oxidoreductase chain 4, chloroplastic.